The chain runs to 756 residues: 1-phosphatidylinositol 4,5-bisphosphate phosphodiesterase delta-1 (756 aa).

Residues Ala-21 to His-130 form the PH domain. Residues Lys-30–Lys-57 form a substrate binding region. 2 consecutive EF-hand domains span residues Lys-140–Gln-175 and Val-176–Arg-211. Ca(2+)-binding residues include Asp-153, Asn-155, Asp-157, Lys-159, Glu-164, Asp-189, Ser-191, Thr-193, Ser-195, and Glu-200. The O-linked (GlcNAc) serine glycan is linked to Ser-191. Thr-193 carries O-linked (GlcNAc) threonine glycosylation. The region spanning Gln-296–Lys-440 is the PI-PLC X-box domain. Residue His-311 is part of the active site. Ca(2+)-binding residues include Asn-312, Glu-341, and Asp-343. His-356 is a catalytic residue. Glu-390 contacts Ca(2+). Positions 438 and 440 each coordinate substrate. Thr-457 carries the post-translational modification Phosphothreonine. Phosphoserine is present on Ser-460. The PI-PLC Y-box domain maps to Leu-492–Arg-609. The substrate site is built by Ser-522 and Arg-549. In terms of domain architecture, C2 spans Pro-611–Ser-737. Ca(2+) is bound by residues Ile-651, Asp-653, Asn-677, Asp-706, Tyr-707, and Asp-708.

Interacts with TGM2. Requires Ca(2+) as cofactor. In terms of tissue distribution, strongly expressed in lung, liver and heart. Also expressed at least in pancreas, kidney, skeletal muscle, placenta and brain.

The enzyme catalyses a 1,2-diacyl-sn-glycero-3-phospho-(1D-myo-inositol-4,5-bisphosphate) + H2O = 1D-myo-inositol 1,4,5-trisphosphate + a 1,2-diacyl-sn-glycerol + H(+). The catalysed reaction is a 1,2-diacyl-sn-glycero-3-phospho-(1D-myo-inositol) + H2O = 1D-myo-inositol 1-phosphate + a 1,2-diacyl-sn-glycerol + H(+). The production of the second messenger molecules diacylglycerol (DAG) and inositol 1,4,5-trisphosphate (IP3) is mediated by activated phosphatidylinositol-specific phospholipase C enzymes. Essential for trophoblast and placental development. Binds phosphatidylinositol 4,5-bisphosphate. This Homo sapiens (Human) protein is 1-phosphatidylinositol 4,5-bisphosphate phosphodiesterase delta-1.